The following is a 275-amino-acid chain: Cis-2,3-dihydrobiphenyl-2,3-diol dehydrogenase (275 aa).

9-33 provides a ligand contact to NAD(+); that stretch reads LITGGASGLGRALVDRFVAEAKVAV. Substrate is bound at residue S140. Y153 serves as the catalytic Proton acceptor.

The protein belongs to the short-chain dehydrogenases/reductases (SDR) family.

The enzyme catalyses (2R,3S)-3-phenylcyclohexa-3,5-diene-1,2-diol + NAD(+) = biphenyl-2,3-diol + NADH + H(+). Its pathway is xenobiotic degradation; biphenyl degradation; 2-hydroxy-2,4-pentadienoate and benzoate from biphenyl: step 2/4. This is Cis-2,3-dihydrobiphenyl-2,3-diol dehydrogenase (bphB) from Metapseudomonas furukawaii (Pseudomonas furukawaii).